The primary structure comprises 359 residues: 3-dehydroquinate synthase (359 aa).

Residues 72–77 (EGEIHK), 106–110 (GVIGD), 130–131 (TS), Lys-143, Lys-152, and 170–173 (CLKT) each bind NAD(+). Zn(2+)-binding residues include Glu-185, His-248, and His-264.

This sequence belongs to the sugar phosphate cyclases superfamily. Dehydroquinate synthase family. It depends on Co(2+) as a cofactor. The cofactor is Zn(2+). Requires NAD(+) as cofactor.

Its subcellular location is the cytoplasm. The catalysed reaction is 7-phospho-2-dehydro-3-deoxy-D-arabino-heptonate = 3-dehydroquinate + phosphate. The protein operates within metabolic intermediate biosynthesis; chorismate biosynthesis; chorismate from D-erythrose 4-phosphate and phosphoenolpyruvate: step 2/7. Its function is as follows. Catalyzes the conversion of 3-deoxy-D-arabino-heptulosonate 7-phosphate (DAHP) to dehydroquinate (DHQ). In Dehalococcoides mccartyi (strain CBDB1), this protein is 3-dehydroquinate synthase.